A 396-amino-acid chain; its full sequence is L-lactate dehydrogenase (396 aa).

Residues 1 to 380 (MIISAASDYR…TQDSLVQGLG (380 aa)) enclose the FMN hydroxy acid dehydrogenase domain. Y24 lines the substrate pocket. FMN-binding residues include S106 and Q127. Position 129 (Y129) interacts with substrate. Residue T155 coordinates FMN. Residue R164 participates in substrate binding. K251 serves as a coordination point for FMN. The active-site Proton acceptor is the H275. R278 is a binding site for substrate. An FMN-binding site is contributed by 306 to 330 (DSGIRNGLDVVRMIALGADTVLLGR).

Belongs to the FMN-dependent alpha-hydroxy acid dehydrogenase family. FMN serves as cofactor.

It is found in the cell inner membrane. The enzyme catalyses (S)-lactate + A = pyruvate + AH2. Functionally, catalyzes the conversion of L-lactate to pyruvate. Is coupled to the respiratory chain. The chain is L-lactate dehydrogenase from Escherichia coli O7:K1 (strain IAI39 / ExPEC).